Reading from the N-terminus, the 293-residue chain is uncharacterized protein (293 aa).

Active-site charge relay system residues include Thr43 and Tyr105. Residue Tyr131 is the Proton donor of the active site. The Schiff-base intermediate with substrate role is filled by Lys159.

The protein belongs to the DapA family. In terms of assembly, homotetramer.

The protein localises to the cytoplasm. This is an uncharacterized protein from Thermococcus onnurineus (strain NA1).